The following is a 90-amino-acid chain: Envelope protein US9 homolog (90 aa).

At 1-63 (MEPLRLADAE…IRRRRRQTRA (63 aa)) the chain is on the intravirion side. A Di-leucine internalization motif motif is present at residues 12–13 (LL). Positions 29–38 (EAYYTESDDE) are acidic. Residues 64 to 84 (AGFVAAFVLVALISGGLGALM) form a helical; Signal-anchor for type II membrane protein membrane-spanning segment. Residues 85–90 (CWLAYR) are Virion surface-facing.

This sequence belongs to the alphaherpesvirinae envelope protein US9 family. Phosphorylated on serines within the acidic cluster. Phosphorylation determines whether endocytosed viral US9 traffics to the trans-Golgi network or recycles to the cell membrane.

The protein resides in the virion membrane. The protein localises to the host Golgi apparatus membrane. Its subcellular location is the host smooth endoplasmic reticulum membrane. It is found in the host cell membrane. Functionally, essential for the anterograde spread of the infection throughout the host nervous system. Together with the gE/gI heterodimer, US9 is involved in the sorting and transport of viral structural components toward axon tips. The chain is Envelope protein US9 homolog from Cercopithecine herpesvirus 1 (CeHV-1).